The chain runs to 254 residues: Ubiquinone/menaquinone biosynthesis C-methyltransferase UbiE (254 aa).

S-adenosyl-L-methionine is bound by residues threonine 77, aspartate 98, 126–127 (NA), and serine 143.

Belongs to the class I-like SAM-binding methyltransferase superfamily. MenG/UbiE family.

It carries out the reaction a 2-demethylmenaquinol + S-adenosyl-L-methionine = a menaquinol + S-adenosyl-L-homocysteine + H(+). The enzyme catalyses a 2-methoxy-6-(all-trans-polyprenyl)benzene-1,4-diol + S-adenosyl-L-methionine = a 5-methoxy-2-methyl-3-(all-trans-polyprenyl)benzene-1,4-diol + S-adenosyl-L-homocysteine + H(+). It participates in quinol/quinone metabolism; menaquinone biosynthesis; menaquinol from 1,4-dihydroxy-2-naphthoate: step 2/2. Its pathway is cofactor biosynthesis; ubiquinone biosynthesis. Its function is as follows. Methyltransferase required for the conversion of demethylmenaquinol (DMKH2) to menaquinol (MKH2) and the conversion of 2-polyprenyl-6-methoxy-1,4-benzoquinol (DDMQH2) to 2-polyprenyl-3-methyl-6-methoxy-1,4-benzoquinol (DMQH2). This is Ubiquinone/menaquinone biosynthesis C-methyltransferase UbiE from Hydrogenovibrio crunogenus (strain DSM 25203 / XCL-2) (Thiomicrospira crunogena).